Reading from the N-terminus, the 209-residue chain is MNGHFISFEGPDGAGKTTVLQAMVEHYQQRLKDQLTVTREPGGNPISEAIRTIILDKNNTEMDERTEALLYAAARRQHLVETILPALKKNHVVFCDRFVDSSIAYQGAGRKIGTDAVYQMNLFATEGALPEKTIYLDVPSELGLKRIMTHRTEDVDRLDLEQLDFHQRVRSAYLDLAKKFPDRIVVIDASQELDDVKRDVIEVLDQILN.

Position 10–17 (glycine 10–threonine 17) interacts with ATP.

Belongs to the thymidylate kinase family.

It catalyses the reaction dTMP + ATP = dTDP + ADP. Phosphorylation of dTMP to form dTDP in both de novo and salvage pathways of dTTP synthesis. In Pediococcus pentosaceus (strain ATCC 25745 / CCUG 21536 / LMG 10740 / 183-1w), this protein is Thymidylate kinase.